A 151-amino-acid polypeptide reads, in one-letter code: Large ribosomal subunit protein bL9 (151 aa).

It belongs to the bacterial ribosomal protein bL9 family.

Binds to the 23S rRNA. The protein is Large ribosomal subunit protein bL9 of Azoarcus sp. (strain BH72).